The sequence spans 163 residues: Phosphopantetheine adenylyltransferase (163 aa).

Substrate is bound at residue Thr10. Residues 10–11 and His18 each bind ATP; that span reads TF. 3 residues coordinate substrate: Lys42, Leu74, and Arg88. ATP contacts are provided by residues 89–91, Glu99, and 124–130; these read GLR and NSFISST.

It belongs to the bacterial CoaD family. As to quaternary structure, homohexamer. Mg(2+) serves as cofactor.

The protein localises to the cytoplasm. It carries out the reaction (R)-4'-phosphopantetheine + ATP + H(+) = 3'-dephospho-CoA + diphosphate. It functions in the pathway cofactor biosynthesis; coenzyme A biosynthesis; CoA from (R)-pantothenate: step 4/5. Reversibly transfers an adenylyl group from ATP to 4'-phosphopantetheine, yielding dephospho-CoA (dPCoA) and pyrophosphate. The protein is Phosphopantetheine adenylyltransferase of Shewanella putrefaciens (strain CN-32 / ATCC BAA-453).